We begin with the raw amino-acid sequence, 575 residues long: Thrombomodulin (575 aa).

Positions 1-18 (MLGVLVLGALALAGLGFP) are cleaved as a signal peptide. Residues 19 to 515 (APAEPQPGGS…TPPAVGLVHS (497 aa)) lie on the Extracellular side of the membrane. Residues 31 to 169 (VEHDCFALYP…VKADGFLCEF (139 aa)) enclose the C-type lectin domain. N-linked (GlcNAc...) asparagine glycans are attached at residues Asn-47, Asn-115, and Asn-116. 19 disulfide bridges follow: Cys-137–Cys-158, Cys-245–Cys-256, Cys-252–Cys-265, Cys-267–Cys-280, Cys-288–Cys-296, Cys-292–Cys-308, Cys-310–Cys-323, Cys-329–Cys-340, Cys-336–Cys-349, Cys-351–Cys-362, Cys-369–Cys-378, Cys-374–Cys-388, Cys-390–Cys-404, Cys-408–Cys-413, Cys-417–Cys-425, Cys-427–Cys-439, Cys-445–Cys-455, Cys-451–Cys-464, and Cys-466–Cys-480. EGF-like domains lie at 241-281 (GAWD…RSCT) and 284-324 (ATQS…HRCE). The region spanning 325-363 (DVDDCILEPSPCPQRCVNTQGGFECHCYPNYDLVDGECV) is the EGF-like 3; calcium-binding domain. Asn-342 carries the post-translational modification (3R)-3-hydroxyasparagine. EGF-like domains are found at residues 365–405 (PVDP…HRCQ) and 404–440 (CQMF…FICT). The N-linked (GlcNAc...) asparagine glycan is linked to Asn-382. An N-linked (GlcNAc...) asparagine glycan is attached at Asn-409. The EGF-like 6; calcium-binding domain maps to 441-481 (DIDECENGGFCSGVCHNLPGTFECICGPDSALARHIGTDCD). The involved in alpha-L/beta-2 and alpha-M/beta-2 integrin binding stretch occupies residues 481 to 515 (DSGKVDGGDSGSGEPPPSPTPGSTLTPPAVGLVHS). The disordered stretch occupies residues 484 to 506 (KVDGGDSGSGEPPPSPTPGSTLT). O-linked (Xyl...) (chondroitin sulfate) serine glycans are attached at residues Ser-490 and Ser-492. A helical membrane pass occupies residues 516–539 (GLLIGISIASLCLVVALLALLCHL). Residues 540-575 (RKKQGAARAKMEYKCAAPSKEVVLQHVRTERTPQRL) lie on the Cytoplasmic side of the membrane.

Interacts with ITGAL, ITGAM and ITGB2. Interacts with thrombin/F2; this interaction switches the specificity of thrombin from a procoagulant to an anticoagulant and antifibrinolytic protease. Interacts with ANGP1 and ANGP2; these interactions significantly inhibit the generation of activated PC and TAFIa/CPB2 by the thrombin/thrombomodulin complex. Interacts with PF4; this interaction enhances generation of activated protein C. Interacts with HMGB1; this interaction inhibits HMGB1 inflammatory activity. N-glycosylated. Post-translationally, the iron and 2-oxoglutarate dependent 3-hydroxylation of aspartate and asparagine is (R) stereospecific within EGF domains. In terms of tissue distribution, endothelial cells are unique in synthesizing thrombomodulin.

The protein resides in the membrane. Its function is as follows. Endothelial cell receptor that plays a critical role in regulating several physiological processes including hemostasis, coagulation, fibrinolysis, inflammation, and angiogenesis. Acts as a cofactor for thrombin activation of protein C/PROC on the surface of vascular endothelial cells leading to initiation of the activated protein C anticoagulant pathway. Also accelerates the activation of the plasma carboxypeptidase B2/CPB2, which catalyzes removal of C-terminal basic amino acids from its substrates including kinins or anaphylatoxins leading to fibrinolysis inhibition. Plays critical protective roles in changing the cleavage specificity of protease-activated receptor 1/PAR1, inhibiting endothelial cell permeability and inflammation. Suppresses inflammation distinctly from its anticoagulant cofactor activity by sequestering HMGB1 thereby preventing it from engaging cellular receptors such as RAGE and contributing to the inflammatory response. This Homo sapiens (Human) protein is Thrombomodulin (THBD).